The following is a 156-amino-acid chain: ATP synthase subunit b 2 (156 aa).

A helical transmembrane segment spans residues 6 to 26 (SMFGQAISFVIFVWLCMKYVW).

Belongs to the ATPase B chain family. As to quaternary structure, F-type ATPases have 2 components, F(1) - the catalytic core - and F(0) - the membrane proton channel. F(1) has five subunits: alpha(3), beta(3), gamma(1), delta(1), epsilon(1). F(0) has three main subunits: a(1), b(2) and c(10-14). The alpha and beta chains form an alternating ring which encloses part of the gamma chain. F(1) is attached to F(0) by a central stalk formed by the gamma and epsilon chains, while a peripheral stalk is formed by the delta and b chains.

The protein resides in the cell inner membrane. Its function is as follows. F(1)F(0) ATP synthase produces ATP from ADP in the presence of a proton or sodium gradient. F-type ATPases consist of two structural domains, F(1) containing the extramembraneous catalytic core and F(0) containing the membrane proton channel, linked together by a central stalk and a peripheral stalk. During catalysis, ATP synthesis in the catalytic domain of F(1) is coupled via a rotary mechanism of the central stalk subunits to proton translocation. Functionally, component of the F(0) channel, it forms part of the peripheral stalk, linking F(1) to F(0). This Vibrio campbellii (strain ATCC BAA-1116) protein is ATP synthase subunit b 2.